Consider the following 509-residue polypeptide: Maturase K (509 aa).

It belongs to the intron maturase 2 family. MatK subfamily.

The protein resides in the plastid. It localises to the chloroplast. In terms of biological role, usually encoded in the trnK tRNA gene intron. Probably assists in splicing its own and other chloroplast group II introns. The polypeptide is Maturase K (Nicotiana acuminata (Acuminate tobacco)).